The primary structure comprises 429 residues: 3-phosphoshikimate 1-carboxyvinyltransferase (429 aa).

3-phosphoshikimate contacts are provided by K11, S12, and R16. Phosphoenolpyruvate is bound at residue K11. Residues G82 and R110 each coordinate phosphoenolpyruvate. Residues S155, Q157, D302, and K329 each coordinate 3-phosphoshikimate. Position 157 (Q157) interacts with phosphoenolpyruvate. D302 (proton acceptor) is an active-site residue. Phosphoenolpyruvate contacts are provided by R333 and R385.

It belongs to the EPSP synthase family. Monomer.

It is found in the cytoplasm. It catalyses the reaction 3-phosphoshikimate + phosphoenolpyruvate = 5-O-(1-carboxyvinyl)-3-phosphoshikimate + phosphate. Its pathway is metabolic intermediate biosynthesis; chorismate biosynthesis; chorismate from D-erythrose 4-phosphate and phosphoenolpyruvate: step 6/7. Catalyzes the transfer of the enolpyruvyl moiety of phosphoenolpyruvate (PEP) to the 5-hydroxyl of shikimate-3-phosphate (S3P) to produce enolpyruvyl shikimate-3-phosphate and inorganic phosphate. In Helicobacter pylori (strain ATCC 700392 / 26695) (Campylobacter pylori), this protein is 3-phosphoshikimate 1-carboxyvinyltransferase.